Here is a 217-residue protein sequence, read N- to C-terminus: MSSDFEGYEQDFAVLTAEITSKIARVPRLPPDEKKQMVANVEKQLEEARELLEQMDLEVREIPPQSRGMYSNRMRSYKQEMGKLETDFKRSRIAYSDEVRNELLGDAGNSSENQRAHLLDNTERLERSSRRLEAGYQIAVETEQIGQEMLENLSHDREKIQRARDRLRDADANLGKSSRILTGMLRRIIQNRILLVILGIIVVIAILTAIAFFVKGH.

The Cytoplasmic portion of the chain corresponds to 1–192 (MSSDFEGYEQ…GMLRRIIQNR (192 aa)). 2 coiled-coil regions span residues 31–92 (PDEK…KRSR) and 112–178 (ENQR…GKSS). The chain crosses the membrane as a helical; Anchor for type IV membrane protein span at residues 193–213 (ILLVILGIIVVIAILTAIAFF). Residues 214-217 (VKGH) lie on the Vesicular side of the membrane.

This sequence belongs to the VTI1 family. Interacts with distinct SNARE complexes that contain either STX5 or STX6. Interacts with NAPA and, to a lesser extent, with NAPG. Identified in a complex containing STX6, STX12, VAMP4 and VTI1A. In terms of tissue distribution, widely expressed.

Its subcellular location is the golgi apparatus membrane. In terms of biological role, V-SNARE that mediates vesicle transport pathways through interactions with t-SNAREs on the target membrane. These interactions are proposed to mediate aspects of the specificity of vesicle trafficking and to promote fusion of the lipid bilayers. Involved in vesicular transport from the late endosomes to the trans-Golgi network. Along with VAMP7, involved in an non-conventional RAB1-dependent traffic route to the cell surface used by KCNIP1 and KCND2. May be concerned with increased secretion of cytokines associated with cellular senescence. This chain is Vesicle transport through interaction with t-SNAREs homolog 1A (Vti1a), found in Mus musculus (Mouse).